We begin with the raw amino-acid sequence, 142 residues long: Large ribosomal subunit protein uL13 (142 aa).

The protein belongs to the universal ribosomal protein uL13 family. Part of the 50S ribosomal subunit.

Functionally, this protein is one of the early assembly proteins of the 50S ribosomal subunit, although it is not seen to bind rRNA by itself. It is important during the early stages of 50S assembly. This chain is Large ribosomal subunit protein uL13, found in Actinobacillus succinogenes (strain ATCC 55618 / DSM 22257 / CCUG 43843 / 130Z).